Here is an 87-residue protein sequence, read N- to C-terminus: U14-lycotoxin-Ls1a (87 aa).

The signal sequence occupies residues 1–20 (MNSKVFAVLLLLALSTCVLS). The WAP domain occupies 21–66 (EKYCPTPRNTSCKKMNIRNNCCRDSDCTSNAFCCAEPCGNFCHKAS). Intrachain disulfides connect Cys24-Cys54, Cys32-Cys58, Cys41-Cys53, Cys42-Cys80, and Cys47-Cys62.

The protein belongs to the venom protein 11 family. 01 (wap-1) subfamily. In terms of processing, contains 5 disulfide bonds. As to expression, expressed by the venom gland.

Its subcellular location is the secreted. Functionally, has antibacterial activity. This chain is U14-lycotoxin-Ls1a, found in Lycosa singoriensis (Wolf spider).